We begin with the raw amino-acid sequence, 788 residues long: Glycerol-3-phosphate acyltransferase (788 aa).

Residues 104-135 are disordered; that stretch reads LLPGRDPYHPNPRQQRRILRSDPQRARVMAGE. An HXXXXD motif motif is present at residues 271–276; sequence SHRSYI.

This sequence belongs to the GPAT/DAPAT family.

It is found in the cell membrane. The catalysed reaction is sn-glycerol 3-phosphate + an acyl-CoA = a 1-acyl-sn-glycero-3-phosphate + CoA. It functions in the pathway phospholipid metabolism; CDP-diacylglycerol biosynthesis; CDP-diacylglycerol from sn-glycerol 3-phosphate: step 1/3. The chain is Glycerol-3-phosphate acyltransferase from Mycobacterium marinum (strain ATCC BAA-535 / M).